A 458-amino-acid chain; its full sequence is Bifunctional protein GlmU (458 aa).

The pyrophosphorylase stretch occupies residues 1–224; it reads MTVIALAAGK…PKVAVGVNNQ (224 aa). UDP-N-acetyl-alpha-D-glucosamine contacts are provided by residues 6 to 9, Lys20, Gln71, and 76 to 77; these read LAAG and GT. Asp99 lines the Mg(2+) pocket. Residues Gly136, Glu150, Asn165, and Asn222 each coordinate UDP-N-acetyl-alpha-D-glucosamine. Asn222 lines the Mg(2+) pocket. The linker stretch occupies residues 225 to 245; that stretch reads LELARATRLLFKRKALRLMED. Residues 246–458 form an N-acetyltransferase region; sequence GVLMIDPRTV…TAETEEKEQV (213 aa). The UDP-N-acetyl-alpha-D-glucosamine site is built by Arg328 and Lys346. His358 functions as the Proton acceptor in the catalytic mechanism. Residues Tyr361 and Asn372 each coordinate UDP-N-acetyl-alpha-D-glucosamine. Acetyl-CoA contacts are provided by residues 381 to 382, Ser401, Ser419, and Arg436; that span reads NY.

This sequence in the N-terminal section; belongs to the N-acetylglucosamine-1-phosphate uridyltransferase family. In the C-terminal section; belongs to the transferase hexapeptide repeat family. In terms of assembly, homotrimer. Mg(2+) serves as cofactor.

It is found in the cytoplasm. It carries out the reaction alpha-D-glucosamine 1-phosphate + acetyl-CoA = N-acetyl-alpha-D-glucosamine 1-phosphate + CoA + H(+). The catalysed reaction is N-acetyl-alpha-D-glucosamine 1-phosphate + UTP + H(+) = UDP-N-acetyl-alpha-D-glucosamine + diphosphate. It participates in nucleotide-sugar biosynthesis; UDP-N-acetyl-alpha-D-glucosamine biosynthesis; N-acetyl-alpha-D-glucosamine 1-phosphate from alpha-D-glucosamine 6-phosphate (route II): step 2/2. It functions in the pathway nucleotide-sugar biosynthesis; UDP-N-acetyl-alpha-D-glucosamine biosynthesis; UDP-N-acetyl-alpha-D-glucosamine from N-acetyl-alpha-D-glucosamine 1-phosphate: step 1/1. The protein operates within bacterial outer membrane biogenesis; LPS lipid A biosynthesis. Its function is as follows. Catalyzes the last two sequential reactions in the de novo biosynthetic pathway for UDP-N-acetylglucosamine (UDP-GlcNAc). The C-terminal domain catalyzes the transfer of acetyl group from acetyl coenzyme A to glucosamine-1-phosphate (GlcN-1-P) to produce N-acetylglucosamine-1-phosphate (GlcNAc-1-P), which is converted into UDP-GlcNAc by the transfer of uridine 5-monophosphate (from uridine 5-triphosphate), a reaction catalyzed by the N-terminal domain. The chain is Bifunctional protein GlmU from Bdellovibrio bacteriovorus (strain ATCC 15356 / DSM 50701 / NCIMB 9529 / HD100).